The primary structure comprises 446 residues: NADP-specific glutamate dehydrogenase (446 aa).

Substrate contacts are provided by Lys-92, Gln-113, and Lys-116. Lys-128 acts as the Proton donor in catalysis. Gly-167 serves as a coordination point for substrate. Thr-211 and Asn-242 together coordinate NADP(+). Ser-379 serves as a coordination point for substrate.

It belongs to the Glu/Leu/Phe/Val dehydrogenases family. In terms of assembly, homohexamer.

It carries out the reaction L-glutamate + NADP(+) + H2O = 2-oxoglutarate + NH4(+) + NADPH + H(+). Its function is as follows. Catalyzes the reversible oxidative deamination of glutamate to a-ketoglutarate and ammonia. The protein is NADP-specific glutamate dehydrogenase (gdhA) of Unknown prokaryotic organism.